The sequence spans 365 residues: Peptide chain release factor 2 (365 aa).

Residue glutamine 251 is modified to N5-methylglutamine.

Belongs to the prokaryotic/mitochondrial release factor family. Methylated by PrmC. Methylation increases the termination efficiency of RF2.

It is found in the cytoplasm. Functionally, peptide chain release factor 2 directs the termination of translation in response to the peptide chain termination codons UGA and UAA. The chain is Peptide chain release factor 2 from Campylobacter jejuni subsp. jejuni serotype O:2 (strain ATCC 700819 / NCTC 11168).